Consider the following 205-residue polypeptide: Recombination protein RecR (205 aa).

Residues 59–74 (CSVCFHLSAEPVCEVC) form a C4-type zinc finger. A Toprim domain is found at 82–181 (GTLCVVADSR…KVTRIAFGLP (100 aa)).

This sequence belongs to the RecR family.

In terms of biological role, may play a role in DNA repair. It seems to be involved in an RecBC-independent recombinational process of DNA repair. It may act with RecF and RecO. The sequence is that of Recombination protein RecR from Cyanothece sp. (strain PCC 7425 / ATCC 29141).